The sequence spans 119 residues: UPF0102 protein PM0647 (119 aa).

This sequence belongs to the UPF0102 family.

This is UPF0102 protein PM0647 from Pasteurella multocida (strain Pm70).